The sequence spans 187 residues: Protein GrpE (187 aa).

Residues 1 to 31 (MEKKETKNDAEKNNKQDNKSTKSQKKENLNL) form a disordered region.

It belongs to the GrpE family. As to quaternary structure, homodimer.

The protein localises to the cytoplasm. Its function is as follows. Participates actively in the response to hyperosmotic and heat shock by preventing the aggregation of stress-denatured proteins, in association with DnaK and GrpE. It is the nucleotide exchange factor for DnaK and may function as a thermosensor. Unfolded proteins bind initially to DnaJ; upon interaction with the DnaJ-bound protein, DnaK hydrolyzes its bound ATP, resulting in the formation of a stable complex. GrpE releases ADP from DnaK; ATP binding to DnaK triggers the release of the substrate protein, thus completing the reaction cycle. Several rounds of ATP-dependent interactions between DnaJ, DnaK and GrpE are required for fully efficient folding. The polypeptide is Protein GrpE (Borrelia garinii subsp. bavariensis (strain ATCC BAA-2496 / DSM 23469 / PBi) (Borreliella bavariensis)).